The chain runs to 142 residues: Nucleoside diphosphate kinase (142 aa).

The ATP site is built by K11, F59, R87, T93, R104, and N114. H117 serves as the catalytic Pros-phosphohistidine intermediate.

It belongs to the NDK family. Homotetramer. The cofactor is Mg(2+).

Its subcellular location is the cytoplasm. It catalyses the reaction dZDP + ATP = dZTP + ADP. The enzyme catalyses a 2'-deoxyribonucleoside 5'-diphosphate + ATP = a 2'-deoxyribonucleoside 5'-triphosphate + ADP. It carries out the reaction a ribonucleoside 5'-diphosphate + ATP = a ribonucleoside 5'-triphosphate + ADP. Its pathway is purine metabolism. Functionally, major role in the synthesis of nucleoside triphosphates other than ATP. The ATP gamma phosphate is transferred to the NDP beta phosphate via a ping-pong mechanism, using a phosphorylated active-site intermediate. In terms of biological role, (Microbial infection) Catalyzes the phosphorylation of dZDP to dZTP, when the bacterium is infected by a phage that produces the substrate for the synthesis of dZTP (2- amino-2'-deoxyadenosine 5'-triphosphate), which is then used by the phage as a DNA polymerase substrate. The protein is Nucleoside diphosphate kinase of Vibrio cholerae serotype O1 (strain ATCC 39315 / El Tor Inaba N16961).